A 210-amino-acid polypeptide reads, in one-letter code: Helix-loop-helix protein 26 (210 aa).

Residues 1–15 (MSSSPTSSSSGSPSS) show a composition bias toward low complexity. The interval 1-33 (MSSSPTSSSSGSPSSHGHRSETEKQRRDDTNDL) is disordered. The bHLH domain maps to 14–65 (SSHGHRSETEKQRRDDTNDLLNEFKKIVQKSESEKLSKEEVLFRIVKLLSGI). The segment covering 18-33 (HRSETEKQRRDDTNDL) has biased composition (basic and acidic residues).

In terms of assembly, homodimer; binds to DNA as a homodimer. Expressed in intestinal cells (at protein level).

Its subcellular location is the nucleus. Functionally, as a homodimer binds DNA via the E-box sequence 5'-CACGTG-3'. Represses lag-2 transcription during embryogenesis via Notch signaling, in an unc-37-dependent manner. Also represses tbx-37 independent of Notch signaling. In the intestine, plays a role in probiotic-mediated protection against infections by pathogens such as S.enterica. This is most likely by positively regulating the expression of genes such as bar-1 upon exposure to probiotic bacteria such as the E.faecium. In Caenorhabditis elegans, this protein is Helix-loop-helix protein 26.